Here is a 770-residue protein sequence, read N- to C-terminus: 1,4-alpha-glucan branching enzyme GlgB (770 aa).

Asp437 functions as the Nucleophile in the catalytic mechanism. Glu488 acts as the Proton donor in catalysis.

This sequence belongs to the glycosyl hydrolase 13 family. GlgB subfamily. In terms of assembly, monomer.

The catalysed reaction is Transfers a segment of a (1-&gt;4)-alpha-D-glucan chain to a primary hydroxy group in a similar glucan chain.. Its pathway is glycan biosynthesis; glycogen biosynthesis. Catalyzes the formation of the alpha-1,6-glucosidic linkages in glycogen by scission of a 1,4-alpha-linked oligosaccharide from growing alpha-1,4-glucan chains and the subsequent attachment of the oligosaccharide to the alpha-1,6 position. In Synechococcus sp. (strain JA-3-3Ab) (Cyanobacteria bacterium Yellowstone A-Prime), this protein is 1,4-alpha-glucan branching enzyme GlgB.